Consider the following 309-residue polypeptide: 4-hydroxy-3-methylbut-2-enyl diphosphate reductase (309 aa).

Residue cysteine 12 participates in [4Fe-4S] cluster binding. Residues histidine 43 and histidine 77 each coordinate (2E)-4-hydroxy-3-methylbut-2-enyl diphosphate. Dimethylallyl diphosphate contacts are provided by histidine 43 and histidine 77. Residues histidine 43 and histidine 77 each coordinate isopentenyl diphosphate. Cysteine 99 is a binding site for [4Fe-4S] cluster. Residue histidine 127 participates in (2E)-4-hydroxy-3-methylbut-2-enyl diphosphate binding. Position 127 (histidine 127) interacts with dimethylallyl diphosphate. Histidine 127 provides a ligand contact to isopentenyl diphosphate. Glutamate 129 functions as the Proton donor in the catalytic mechanism. Residue threonine 167 coordinates (2E)-4-hydroxy-3-methylbut-2-enyl diphosphate. Position 197 (cysteine 197) interacts with [4Fe-4S] cluster. Positions 225, 226, 227, and 269 each coordinate (2E)-4-hydroxy-3-methylbut-2-enyl diphosphate. Serine 225, serine 226, asparagine 227, and serine 269 together coordinate dimethylallyl diphosphate. Isopentenyl diphosphate contacts are provided by serine 225, serine 226, asparagine 227, and serine 269.

This sequence belongs to the IspH family. The cofactor is [4Fe-4S] cluster.

It carries out the reaction isopentenyl diphosphate + 2 oxidized [2Fe-2S]-[ferredoxin] + H2O = (2E)-4-hydroxy-3-methylbut-2-enyl diphosphate + 2 reduced [2Fe-2S]-[ferredoxin] + 2 H(+). The catalysed reaction is dimethylallyl diphosphate + 2 oxidized [2Fe-2S]-[ferredoxin] + H2O = (2E)-4-hydroxy-3-methylbut-2-enyl diphosphate + 2 reduced [2Fe-2S]-[ferredoxin] + 2 H(+). Its pathway is isoprenoid biosynthesis; dimethylallyl diphosphate biosynthesis; dimethylallyl diphosphate from (2E)-4-hydroxy-3-methylbutenyl diphosphate: step 1/1. It participates in isoprenoid biosynthesis; isopentenyl diphosphate biosynthesis via DXP pathway; isopentenyl diphosphate from 1-deoxy-D-xylulose 5-phosphate: step 6/6. Functionally, catalyzes the conversion of 1-hydroxy-2-methyl-2-(E)-butenyl 4-diphosphate (HMBPP) into a mixture of isopentenyl diphosphate (IPP) and dimethylallyl diphosphate (DMAPP). Acts in the terminal step of the DOXP/MEP pathway for isoprenoid precursor biosynthesis. The sequence is that of 4-hydroxy-3-methylbut-2-enyl diphosphate reductase from Wolbachia sp. subsp. Brugia malayi (strain TRS).